The primary structure comprises 427 residues: Glutamate-1-semialdehyde 2,1-aminomutase (427 aa).

At Lys-265 the chain carries N6-(pyridoxal phosphate)lysine.

It belongs to the class-III pyridoxal-phosphate-dependent aminotransferase family. HemL subfamily. As to quaternary structure, homodimer. Pyridoxal 5'-phosphate is required as a cofactor.

Its subcellular location is the cytoplasm. It catalyses the reaction (S)-4-amino-5-oxopentanoate = 5-aminolevulinate. Its pathway is porphyrin-containing compound metabolism; protoporphyrin-IX biosynthesis; 5-aminolevulinate from L-glutamyl-tRNA(Glu): step 2/2. This is Glutamate-1-semialdehyde 2,1-aminomutase from Photorhabdus laumondii subsp. laumondii (strain DSM 15139 / CIP 105565 / TT01) (Photorhabdus luminescens subsp. laumondii).